A 237-amino-acid polypeptide reads, in one-letter code: Orotidine 5'-phosphate decarboxylase (237 aa).

Residues aspartate 10, lysine 32, 59 to 68 (DLKLHDIPNT), threonine 118, arginine 180, glutamine 189, glycine 209, and arginine 210 contribute to the substrate site. The active-site Proton donor is lysine 61.

Belongs to the OMP decarboxylase family. Type 1 subfamily. Homodimer.

It catalyses the reaction orotidine 5'-phosphate + H(+) = UMP + CO2. It participates in pyrimidine metabolism; UMP biosynthesis via de novo pathway; UMP from orotate: step 2/2. Catalyzes the decarboxylation of orotidine 5'-monophosphate (OMP) to uridine 5'-monophosphate (UMP). The protein is Orotidine 5'-phosphate decarboxylase of Fusobacterium nucleatum subsp. nucleatum (strain ATCC 25586 / DSM 15643 / BCRC 10681 / CIP 101130 / JCM 8532 / KCTC 2640 / LMG 13131 / VPI 4355).